The sequence spans 92 residues: Small ribosomal subunit protein uS17 (92 aa).

This sequence belongs to the universal ribosomal protein uS17 family. As to quaternary structure, part of the 30S ribosomal subunit.

Functionally, one of the primary rRNA binding proteins, it binds specifically to the 5'-end of 16S ribosomal RNA. This chain is Small ribosomal subunit protein uS17, found in Mycoplasma mobile (strain ATCC 43663 / 163K / NCTC 11711) (Mesomycoplasma mobile).